Here is a 324-residue protein sequence, read N- to C-terminus: ATP synthase subunit a 2 (324 aa).

The first 33 residues, Met-1 to Ser-33, serve as a signal peptide directing secretion. 6 consecutive transmembrane segments (helical) span residues His-95–Asn-115, Leu-157–Pro-177, Gly-179–Ile-199, Ala-224–Leu-244, Ile-257–Phe-277, and Ile-291–Leu-311.

It belongs to the ATPase A chain family. In terms of assembly, F-type ATPases have 2 components, CF(1) - the catalytic core - and CF(0) - the membrane proton channel. CF(1) has five subunits: alpha(3), beta(3), gamma(1), delta(1), epsilon(1). CF(0) has four main subunits: a, b, b' and c.

Its subcellular location is the cell inner membrane. In terms of biological role, key component of the proton channel; it plays a direct role in the translocation of protons across the membrane. The chain is ATP synthase subunit a 2 from Prosthecochloris aestuarii (strain DSM 271 / SK 413).